The following is an 88-amino-acid chain: Large ribosomal subunit protein bL31B (88 aa).

The protein belongs to the bacterial ribosomal protein bL31 family. Type B subfamily. In terms of assembly, part of the 50S ribosomal subunit.

The sequence is that of Large ribosomal subunit protein bL31B from Leuconostoc citreum (strain KM20).